The primary structure comprises 56 residues: Protein hunchback (56 aa).

3 consecutive C2H2-type zinc fingers follow at residues 1–5 (HLRNH), 11–33 (FRCD…LKSH), and 39–56 (YRCA…SLKL).

Belongs to the hunchback C2H2-type zinc-finger protein family.

The protein localises to the nucleus. Its function is as follows. Gap class segmentation protein that controls development of head structures. In Locusta migratoria (Migratory locust), this protein is Protein hunchback (hb).